The following is a 513-amino-acid chain: Na(+)/H(+) antiporter NhaB (513 aa).

A run of 12 helical transmembrane segments spans residues 23–43 (LALI…PFVA), 52–72 (IFTL…LLAI), 97–117 (LLLM…LFIF), 120–140 (LLLS…AAAF), 144–164 (FLDA…FYGI), 202–222 (LMMH…VGEP), 238–258 (FFLR…LTCL), 303–323 (AIIG…VGLI), 348–368 (TESL…AVII), 391–411 (LFYI…VGTI), 447–467 (ATPN…APLI), and 475–495 (VWMA…CVEF).

The protein belongs to the NhaB Na(+)/H(+) (TC 2.A.34) antiporter family.

Its subcellular location is the cell inner membrane. It carries out the reaction 2 Na(+)(in) + 3 H(+)(out) = 2 Na(+)(out) + 3 H(+)(in). Functionally, na(+)/H(+) antiporter that extrudes sodium in exchange for external protons. This chain is Na(+)/H(+) antiporter NhaB, found in Escherichia coli O127:H6 (strain E2348/69 / EPEC).